The following is a 479-amino-acid chain: UDP-N-acetylmuramate--L-alanine ligase (479 aa).

Residue 115–121 (GTHGKTT) coordinates ATP.

Belongs to the MurCDEF family.

It localises to the cytoplasm. The enzyme catalyses UDP-N-acetyl-alpha-D-muramate + L-alanine + ATP = UDP-N-acetyl-alpha-D-muramoyl-L-alanine + ADP + phosphate + H(+). It functions in the pathway cell wall biogenesis; peptidoglycan biosynthesis. Cell wall formation. This Acidiphilium cryptum (strain JF-5) protein is UDP-N-acetylmuramate--L-alanine ligase.